We begin with the raw amino-acid sequence, 143 residues long: MAIERTLSIVKPDAVSKNHIGEIFARFEKAGLKIVATKMKHLSQADAEGFYAEHKERGFFGDLVAFMTSGPVVVSVLEGENAVLAHREILGATNPKEAAPGTIRADFAVSIDENAAHGSDSVASAEREIAYFFADNEICPRTR.

ATP contacts are provided by Lys-11, Phe-59, Arg-87, Thr-93, Arg-104, and Asn-114. The active-site Pros-phosphohistidine intermediate is the His-117.

It belongs to the NDK family. As to quaternary structure, homotetramer. It depends on Mg(2+) as a cofactor.

The protein localises to the cytoplasm. It carries out the reaction dZDP + ATP = dZTP + ADP. It catalyses the reaction a 2'-deoxyribonucleoside 5'-diphosphate + ATP = a 2'-deoxyribonucleoside 5'-triphosphate + ADP. The catalysed reaction is a ribonucleoside 5'-diphosphate + ATP = a ribonucleoside 5'-triphosphate + ADP. It functions in the pathway purine metabolism. Major role in the synthesis of nucleoside triphosphates other than ATP. The ATP gamma phosphate is transferred to the NDP beta phosphate via a ping-pong mechanism, using a phosphorylated active-site intermediate. In terms of biological role, (Microbial infection) Catalyzes the phosphorylation of dZDP to dZTP, when the bacterium is infected by a phage that produces the substrate for the synthesis of dZTP (2- amino-2'-deoxyadenosine 5'-triphosphate), which is then used by the phage as a DNA polymerase substrate. In Acinetobacter baumannii (strain AB307-0294), this protein is Nucleoside diphosphate kinase.